A 770-amino-acid chain; its full sequence is 3-isopropylmalate dehydratase (770 aa).

[4Fe-4S] cluster-binding residues include C354, C415, and C418.

It belongs to the aconitase/IPM isomerase family. As to quaternary structure, monomer. It depends on [4Fe-4S] cluster as a cofactor.

The enzyme catalyses (2R,3S)-3-isopropylmalate = (2S)-2-isopropylmalate. The protein operates within amino-acid biosynthesis; L-leucine biosynthesis; L-leucine from 3-methyl-2-oxobutanoate: step 2/4. Catalyzes the isomerization between 2-isopropylmalate and 3-isopropylmalate, via the formation of 2-isopropylmaleate. The chain is 3-isopropylmalate dehydratase (LEU1) from Candida maltosa (Yeast).